The sequence spans 344 residues: Transcription factor HRS1 (344 aa).

The tract at residues 88-184 (IKDSSTSNEE…DGGGGRKQRR (97 aa)) is disordered. A compositionally biased stretch (acidic residues) spans 95-104 (NEEEDEEFDD). Composition is skewed to basic and acidic residues over residues 105–124 (EHGNHDPDNDSEDKNTKSDW) and 138–178 (LLPK…DGGG). The region spanning 178-238 (GGRKQRRCWS…HLQKYRLHTR (61 aa)) is the HTH myb-type domain. Residues 209–234 (PKQIREFMKVDGLTNDEVKSHLQKYR) constitute a DNA-binding region (H-T-H motif). Over residues 269 to 291 (STGKTTGGATTSSTTTTTGIYGT) the composition is skewed to low complexity. The interval 269-322 (STGKTTGGATTSSTTTTTGIYGTMAAPPPPQWPSHSNYRPSIIVDEGSGSHSEG) is disordered.

Expressed in the root hair region and root hair cells.

It is found in the nucleus. Functionally, transcription factor involved in nitrate and phosphate signaling in roots. Integrates nitrate and phosphate starvation responses and adaptation of root architecture depending on nutrient availabilities. Acts downstream of the nitrate sensor and transporter NPF6.3/NRT1.1. Represses primary root development in response to phosphate deficiency conditions, only when nitrate is present. Involved in the modulation of primary root and root hair growth in phosphate-deprived environment. May be required for suppressing abscisic acid (ABA) signaling in germinating embryo axis, which promotes the timely germination of seeds. In Arabidopsis thaliana (Mouse-ear cress), this protein is Transcription factor HRS1.